Consider the following 632-residue polypeptide: MWRVCARRVQSAVPRAGFRARWATLKGPRTGPAAVRCGSGIPSYGVRSLCGWSYGSATVPRNRILQQLLGSPSRRSYSLPPHQKVPLPSLSPTMQAGTIARWEKKEGEKISEGDLIAEVETDKATVGFESLEECYMAKILVPEGTRDVPVGSIICITVEKPQDIEAFKNYTLDSATAATQAAPAPAAAPAAAPAAPSASAPGSSYPVHMQIVLPALSPTMTMGTVQRWEKKVGEKLSEGDLLAEIETDKATIGFEVQEEGYLAKILVPEGTRDVPLGTPLCIIVEKQEDIAAFADYRPTEVTSLKPQAPPPVPPPVAAVPPIPQPLAPTPSAAPAGPKGRVFVSPLAKKLAAEKGIDLTQVKGTGPEGRIIKKDIDSFVPTKAAPAAAAAAPPGPRVAPTPAGVFIDIPISNIRRVIAQRLMQSKQTIPHYYLSVDVNMGEVLLVRKELNKMLEGKGKISVNDFIIKASALACLKVPEANSSWMDTVIRQNHVVDVSVAVSTPAGLITPIVFNAHIKGLETIASDVVSLASKAREGKLQPHEFQGGTFTISNLGMFGIKNFSAIINPPQACILAIGASEDKLIPADNEKGFDVASVMSVTLSCDHRVVDGAVGAQWLAEFKKYLEKPVTMLL.

The N-terminal 77 residues, 1-77 (MWRVCARRVQ…LLGSPSRRSY (77 aa)), are a transit peptide targeting the mitochondrion. Lipoyl-binding domains are found at residues 82–158 (HQKV…CITV) and 208–284 (HMQI…CIIV). At Ser91 the chain carries Phosphoserine. Lys123 and Lys249 each carry N6-lipoyllysine. Positions 342–379 (FVSPLAKKLAAEKGIDLTQVKGTGPEGRIIKKDIDSFV) constitute a Peripheral subunit-binding (PSBD) domain. Residue Arg446 coordinates CoA. Position 451 is an N6-acetyllysine (Lys451). The residue at position 458 (Lys458) is an N6-succinyllysine. Ser460 is a binding site for CoA. An N6-succinyllysine modification is found at Lys532. The CoA site is built by Ser551, Asn552, and Gly576. Catalysis depends on residues His605 and Asp609.

This sequence belongs to the 2-oxoacid dehydrogenase family. Part of the pyruvate dehydrogenase complex (PDHc) that is a multi-enzyme complex composed of multiple copies of three enzymes, pyruvate dehydrogenase (subunits PDH1A and PDHB, E1 component), dihydrolipoamide acetyltransferase (DLAT, E2 component), and dihydrolipoamide dehydrogenase (DLD, E3 component) to which is added an additional protein the E3-binding protein (PDHX, E3BP). In terms of structural architecture, the E2 and E3BP components assemble into a 60meric central core with icosahedral symmetry. The central core is decorated with E1 and E3 proteins. Currently, two alternative models for the E2:E3BP stoichiometry are considered as being either 48:12 (E2(48)-E3BP(12)) or 40:20 (E2(40)-E3BP(20)). Interacts with PDK2 and PDK3. Interacts with SIRT4. Interacts with PDHB. Requires (R)-lipoate as cofactor. Delipoylated at Lys-123 and Lys-249 by SIRT4, delipoylation decreases the PHD complex activity. As to expression, expressed in flagella of epididymal sperm.

It is found in the mitochondrion matrix. It carries out the reaction N(6)-[(R)-dihydrolipoyl]-L-lysyl-[protein] + acetyl-CoA = N(6)-[(R)-S(8)-acetyldihydrolipoyl]-L-lysyl-[protein] + CoA. Its function is as follows. As part of the pyruvate dehydrogenase complex, catalyzes the transfers of an acetyl group to a lipoic acid moiety. The pyruvate dehydrogenase complex, catalyzes the overall conversion of pyruvate to acetyl-CoA and CO(2), and thereby links cytoplasmic glycolysis and the mitochondrial tricarboxylic acid (TCA) cycle. This chain is Dihydrolipoyllysine-residue acetyltransferase component of pyruvate dehydrogenase complex, mitochondrial, found in Rattus norvegicus (Rat).